The chain runs to 218 residues: MSQNEPKIPQATAKRLPLYYRFIQSLHASGKQRVSSAELSEAVKVDSATIRRDFSYFGALGKKGYGYNVQYLLDFFRKTLNQDEITNVALVGVGHLGTAFVNYNFLKNNNTHIVVGFDADETKVGTTMSGVPIHHVDEMEQIMKQNKIDVAILTVPSAYAQSVADDLVRFGIKGILNFTPARLTVPDTVRVHHIDLSIELQSLIYFMQHYPTAEGVHQ.

The segment at residues 18–57 (LYYRFIQSLHASGKQRVSSAELSEAVKVDSATIRRDFSYF) is a DNA-binding region (H-T-H motif). 92-97 (GVGHLG) contributes to the NAD(+) binding site.

Belongs to the transcriptional regulatory Rex family. As to quaternary structure, homodimer.

It localises to the cytoplasm. In terms of biological role, modulates transcription in response to changes in cellular NADH/NAD(+) redox state. This Exiguobacterium sp. (strain ATCC BAA-1283 / AT1b) protein is Redox-sensing transcriptional repressor Rex.